Reading from the N-terminus, the 408-residue chain is Acetate kinase (408 aa).

Asparagine 7 contributes to the Mg(2+) binding site. Position 14 (lysine 14) interacts with ATP. Arginine 91 lines the substrate pocket. Catalysis depends on aspartate 148, which acts as the Proton donor/acceptor. ATP contacts are provided by residues histidine 208 to glycine 212, aspartate 283 to arginine 285, and glycine 331 to asparagine 335. Position 384 (glutamate 384) interacts with Mg(2+).

The protein belongs to the acetokinase family. Homodimer. It depends on Mg(2+) as a cofactor. Requires Mn(2+) as cofactor.

Its subcellular location is the cytoplasm. The enzyme catalyses acetate + ATP = acetyl phosphate + ADP. It functions in the pathway metabolic intermediate biosynthesis; acetyl-CoA biosynthesis; acetyl-CoA from acetate: step 1/2. In terms of biological role, catalyzes the formation of acetyl phosphate from acetate and ATP. Can also catalyze the reverse reaction. This chain is Acetate kinase, found in Methanosarcina acetivorans (strain ATCC 35395 / DSM 2834 / JCM 12185 / C2A).